Reading from the N-terminus, the 556-residue chain is Formate--tetrahydrofolate ligase (556 aa).

65-72 (TPAGEGKS) contacts ATP.

It belongs to the formate--tetrahydrofolate ligase family.

It catalyses the reaction (6S)-5,6,7,8-tetrahydrofolate + formate + ATP = (6R)-10-formyltetrahydrofolate + ADP + phosphate. Its pathway is one-carbon metabolism; tetrahydrofolate interconversion. In Enterococcus faecalis (strain ATCC 700802 / V583), this protein is Formate--tetrahydrofolate ligase.